The chain runs to 932 residues: 2-oxoglutarate dehydrogenase E1 component (932 aa).

The protein belongs to the alpha-ketoglutarate dehydrogenase family. As to quaternary structure, homodimer. Part of the 2-oxoglutarate dehydrogenase (OGDH) complex composed of E1 (2-oxoglutarate dehydrogenase), E2 (dihydrolipoamide succinyltransferase) and E3 (dihydrolipoamide dehydrogenase); the complex contains multiple copies of the three enzymatic components (E1, E2 and E3). Thiamine diphosphate serves as cofactor.

It carries out the reaction N(6)-[(R)-lipoyl]-L-lysyl-[protein] + 2-oxoglutarate + H(+) = N(6)-[(R)-S(8)-succinyldihydrolipoyl]-L-lysyl-[protein] + CO2. Functionally, E1 component of the 2-oxoglutarate dehydrogenase (OGDH) complex which catalyzes the decarboxylation of 2-oxoglutarate, the first step in the conversion of 2-oxoglutarate to succinyl-CoA and CO(2). The chain is 2-oxoglutarate dehydrogenase E1 component from Staphylococcus aureus (strain bovine RF122 / ET3-1).